We begin with the raw amino-acid sequence, 384 residues long: Probable inactive patatin-like protein 9 (384 aa).

One can recognise a PNPLA domain in the interval 33-234 (LSIDGGGTTG…VMNNPTAAAV (202 aa)). A GXGXXG motif is present at residues 37–42 (GGGTTG). The active-site Proton acceptor is the Asp221. The short motif at 221–223 (DGG) is the DGA/G element. The tract at residues 363-384 (GKSSLPPSPCKESAVNPLADGR) is disordered.

It belongs to the patatin family. Highly expressed in roots and at lower levels in flowers and siliques.

In Arabidopsis thaliana (Mouse-ear cress), this protein is Probable inactive patatin-like protein 9 (PLP9).